The primary structure comprises 317 residues: Copper transporter MctB (317 aa).

Residues 1–28 (MISLRQHAFSLAAVFLALAVGVVLGSGF) form the signal peptide.

Belongs to the MctB (TC 1.B.50) family.

The protein localises to the cell outer membrane. In terms of biological role, pore-forming protein, which is involved in efflux of copper across the outer membrane. Essential for copper resistance and maintenance of a low intracellular copper concentration. The chain is Copper transporter MctB (mctB) from Mycobacterium leprae (strain TN).